Reading from the N-terminus, the 664-residue chain is Lamin tail domain-containing protein 2 (664 aa).

Residues 1-40 (MAPKSCQESEDKQVSPAPAGVQPDSSDLGSPVGTPVDRVA) form a disordered region. The stretch at 118-169 (QDKFLRNQVQKLTLELKAQKEQAQQEKQQLEEKLQQNLWAKQQLEAELQTFQ) forms a coiled coil. The span at 245–260 (SDQKQSQPPTSETYTL) shows a compositional bias: polar residues. Disordered stretches follow at residues 245 to 272 (SDQK…TEKP) and 286 to 329 (TSSS…MQEH). Residues 286–298 (TSSSERTQSDTSS) are compositionally biased toward low complexity. The segment covering 312–325 (GHPSQGTNLASSEQ) has biased composition (polar residues). The region spanning 362–481 (PYTRPQLNPF…QVLSEHQATP (120 aa)) is the LTD domain. Residues 504-563 (SESEPDVHPGEQQCRPSSPQKGRAKDAGARRKKPGPGVRQHRHSSTSGLRASRTLHPTET) are disordered. Positions 533–547 (RRKKPGPGVRQHRHS) are enriched in basic residues.

The chain is Lamin tail domain-containing protein 2 (Lmntd2) from Mus musculus (Mouse).